Reading from the N-terminus, the 595-residue chain is P2X purinoceptor 7 (595 aa).

Residues 1 to 22 lie on the Cytoplasmic side of the membrane; that stretch reads MPACCSCSDVFQYETNKVTRIQ. The S-palmitoyl cysteine moiety is linked to residue Cys-4. A helical transmembrane segment spans residues 23–46; sequence SMNYGTIKWFFHVIIFSYVCFALV. Residues 47 to 328 are Extracellular-facing; it reads SDKLYQRKEP…ILVFGTGGKF (282 aa). Cystine bridges form between Cys-119–Cys-168, Cys-129–Cys-152, and Cys-135–Cys-162. 2 positions are modified to ADP-ribosylarginine: Arg-125 and Arg-133. Asn-187 carries N-linked (GlcNAc...) asparagine glycosylation. Position 189 (Thr-189) interacts with ATP. Residues Asn-202 and Asn-213 are each glycosylated (N-linked (GlcNAc...) asparagine). A disulfide bond links Cys-216 and Cys-226. An N-linked (GlcNAc...) asparagine glycan is attached at Asn-241. Residues Cys-260 and Cys-269 are joined by a disulfide bond. Residue Asn-284 is glycosylated (N-linked (GlcNAc...) asparagine). ATP-binding residues include Arg-294 and Lys-311. The chain crosses the membrane as a helical span at residues 329 to 353; the sequence is DIIQLVVYIGSTLSYFGLAAVFIDF. Ser-342 serves as a coordination point for Na(+). Tyr-343 is modified (phosphotyrosine). Residues 354 to 595 are Cytoplasmic-facing; sequence LIDTYSSNCC…GQYSGFKSPY (242 aa). A C-cys anchor region spans residues 360–377; it reads SNCCRSHIYPWCKCCQPC. S-palmitoyl cysteine attachment occurs at residues Cys-362, Cys-363, Cys-374, and Cys-377. Residue Ser-390 is modified to Phosphoserine. Residues 395-595 form a cytoplasmic ballast region; it reads KPTLKYVSFV…GQYSGFKSPY (201 aa). Positions 479, 499, and 506 each coordinate Zn(2+). Residues Arg-546, His-547, Tyr-550, and Ala-567 each coordinate GTP. Cys-572 is a binding site for Zn(2+). GTP contacts are provided by Lys-583, Ser-589, and Gly-590.

This sequence belongs to the P2X receptor family. As to quaternary structure, homotrimers. Interacts with LAMA3, ITGB2, ACTB, ACTN4, SVIL, MPP3, HSPA1, HSPCB, HSPA8, PIK230 and PTPRB. Interacts (via C-terminus) with EMP2. Interacts with isoform B; this interaction potentiates P2RX7 responses. Phosphorylation results in its inactivation. Post-translationally, ADP-ribosylation at Arg-125 is necessary and sufficient to activate P2RX7 and gate the channel. In terms of processing, palmitoylation of several cysteines in the C-terminal cytoplasmic tail is required for efficient localization to cell surface. Palmitoylation prevents channel desensitization by physically anchoring the palmitoylated groups to the membrane. Widely expressed with highest levels in brain and immune tissues. In terms of tissue distribution, predominant form in many tissues.

It localises to the cell membrane. The enzyme catalyses Ca(2+)(in) = Ca(2+)(out). It catalyses the reaction K(+)(in) = K(+)(out). It carries out the reaction Na(+)(in) = Na(+)(out). Its activity is regulated as follows. Activated by high extracellular ATP levels (0.1-2.5 mM). The synthetic analog 2'(3')-O-(4-benzoylbenzoyl)ATP (BzATP) acts as a potent agonist. Does not undergo desensitization, instead, undergoes a facilitation process where currents progressively increase with repetitive or prolonged agonist application. Palmitoylation prevents channel desensitization. The permeability of the P2RX7 channel is modulated by the amount of cholesterol in the plasma membrane. Its function is as follows. ATP-gated nonselective transmembrane cation channel that requires high millimolar concentrations of ATP for activation. Upon ATP binding, it rapidly opens to allow the influx of small cations Na(+) and Ca(2+), and the K(+) efflux. Also has the ability to form a large pore in the cell membrane, allowing the passage of large cationic molecules. In microglia, may mediate NADPH transport across the plasma membrane. In immune cells, P2RX7 acts as a molecular sensor in pathological inflammatory states by detecting and responding to high local concentrations of extracellar ATP. In microglial cells, P2RX7 activation leads to the release of pro-inflammatory cytokines, such as IL-1beta and IL-18, through the activation of the NLRP3 inflammasome and caspase-1. Cooperates with KCNK6 to activate NLRP3 inflammasome. Activates death pathways leading to apoptosis and autophagy. Activates death pathways leading to pyroptosis. Shows ion channel activity but no macropore function. Functionally, non-functional channel. This is P2X purinoceptor 7 (P2RX7) from Homo sapiens (Human).